The primary structure comprises 889 residues: Protein SEY1 homolog (889 aa).

Residues 1 to 801 (MDTKTQIIDY…ETGAKMSLKN (801 aa)) are Cytoplasmic-facing. Positions 31-277 (GFNYNVIAIL…IPSDGFAHYC (247 aa)) constitute a GB1/RHD3-type G domain. 41 to 48 (GSQSSGKS) serves as a coordination point for GTP. The segment at 429–449 (RKDGKGGSSPSAGDKKDTKDT) is disordered. The stretch at 679 to 699 (LDEIMDVLKSKLDEISDNLSS) forms a coiled coil. The chain crosses the membrane as a helical span at residues 802-822 (VPLFFWVILLILGWNELLFFT). Topologically, residues 823 to 825 (RFF) are lumenal. A helical membrane pass occupies residues 826-846 (FRLNIILPLFLAAAVILSTLV). Residues 847–889 (FNGNMEVLSIINKAVFFLAKNSFGVYRQLQAMGGKAAQGAAAD) lie on the Cytoplasmic side of the membrane.

The protein belongs to the TRAFAC class dynamin-like GTPase superfamily. GB1/RHD3 GTPase family. RHD3 subfamily.

The protein resides in the endoplasmic reticulum membrane. In terms of biological role, probable GTP-binding protein involved in generating and maintaining the structure of the tubular endoplasmic reticulum network. This is Protein SEY1 homolog from Plasmodium vivax (strain Salvador I).